The primary structure comprises 126 residues: DNA-directed RNA polymerase I subunit RPA12 (126 aa).

Zn(2+)-binding residues include C20, C23, C38, C41, C87, and C90. The segment at 20–41 adopts a C4-type zinc-finger fold; that stretch reads CSDCGSVLPLPGAQDTVTCIRC. Residues 83-123 form a TFIIS-type zinc finger; sequence VDRRCPRCGHEGMAYHTRQMRSADEGQTVFYTCTNCKFQEK. Residues 106 to 107 carry the Hairpin motif; sequence DE. C115 and C118 together coordinate Zn(2+).

It belongs to the archaeal RpoM/eukaryotic RPA12/RPB9/RPC11 RNA polymerase family. As to quaternary structure, component of the RNA polymerase I (Pol I) complex consisting of 13 subunits: a ten-subunit catalytic core composed of POLR1A/RPA1, POLR1B/RPA2, POLR1C/RPAC1, POLR1D/RPAC2, POLR1H/RPA12, POLR2E/RPABC1, POLR2F/RPABC2, POLR2H/RPABC3, POLR2K/RPABC4 and POLR2L/RPABC5; a mobile stalk subunit POLR1F/RPA43 protruding from the core and additional subunits homologous to general transcription factors POLR1E/RPA49 and POLR1G/RPA34. Part of Pol I pre-initiation complex (PIC), in which Pol I core assembles with RRN3 and promoter-bound UTBF and SL1/TIF-IB complex.

The protein resides in the nucleus. Its subcellular location is the nucleolus. Core component of RNA polymerase I (Pol I), a DNA-dependent RNA polymerase which synthesizes ribosomal RNA precursors using the four ribonucleoside triphosphates as substrates. Can mediate Pol I proofreading of the nascent RNA transcript. Anchors into the Pol I active site to monitor transcription fidelity and cleave mis-incorporated 5'-ribonucleotides. The protein is DNA-directed RNA polymerase I subunit RPA12 of Homo sapiens (Human).